Reading from the N-terminus, the 623-residue chain is Pyranose 2-oxidase (623 aa).

The first 28 residues, 1–28 (MSTSSSDPFFNFAKSSFRSAAAQKASAS), serve as a signal peptide directing secretion. Positions 29–38 (SLPPLPGPDK) are excised as a propeptide. Position 167 is a tele-8alpha-FAD histidine (His167). Positions 448 and 450 each coordinate substrate. His548 (proton acceptor) is an active-site residue. Asn593 is an active-site residue.

It belongs to the GMC oxidoreductase family. In terms of assembly, homotetramer. FAD is required as a cofactor.

It is found in the periplasm. It catalyses the reaction D-glucose + O2 = 2-dehydro-D-glucose + H2O2. Functionally, catalyzes the oxidation of various aldopyranoses and disaccharides on carbon-2 to the corresponding 2-keto sugars concomitant with the reduction of O(2) to H(2)O(2). Plays an important role in lignin degradation of wood rot fungi by supplying the essential cosubstrate H(2)O(2) for the ligninolytic peroxidases, lignin peroxidase and manganese-dependent peroxidase. In Peniophora sp. (strain SG) (White-rot fungus), this protein is Pyranose 2-oxidase (p2ox).